Reading from the N-terminus, the 230-residue chain is UPF0173 metal-dependent hydrolase Rsph17025_2229 (230 aa).

The protein belongs to the UPF0173 family.

The sequence is that of UPF0173 metal-dependent hydrolase Rsph17025_2229 from Cereibacter sphaeroides (strain ATCC 17025 / ATH 2.4.3) (Rhodobacter sphaeroides).